The chain runs to 901 residues: Disease resistance RPP8-like protein 3 (901 aa).

Residues 15–56 are a coiled coil; the sequence is ALLNRESERLNGIDEQVDGLKRQLRGLQSLLKDADAKKHGSD. The 310-residue stretch at 144–453 folds into the NB-ARC domain; that stretch reads LQDIQREIRQ…AEGIYDGLTI (310 aa). ATP-binding positions include 190–197 and 385–392; these read GMGGIGKT and GAQIVGKS. LRR repeat units lie at residues 567 to 591, 592 to 615, and 833 to 858; these read LPLLRVLDLSSVKFEGGKLPSSIGG, LIHLRFLSLHQAVVSHLPSTIRNL, and MPCLRDLIIHSCEKLEELPDGLKYVT.

The protein belongs to the disease resistance NB-LRR family. RPP8/HRT subfamily.

Disease resistance protein. This is Disease resistance RPP8-like protein 3 (RPP8L3) from Arabidopsis thaliana (Mouse-ear cress).